Reading from the N-terminus, the 207-residue chain is Ribosomal RNA large subunit methyltransferase E (207 aa).

The S-adenosyl-L-methionine site is built by G51, W53, D69, D85, and D108. K148 acts as the Proton acceptor in catalysis.

Belongs to the class I-like SAM-binding methyltransferase superfamily. RNA methyltransferase RlmE family.

It localises to the cytoplasm. The catalysed reaction is uridine(2552) in 23S rRNA + S-adenosyl-L-methionine = 2'-O-methyluridine(2552) in 23S rRNA + S-adenosyl-L-homocysteine + H(+). Specifically methylates the uridine in position 2552 of 23S rRNA at the 2'-O position of the ribose in the fully assembled 50S ribosomal subunit. This chain is Ribosomal RNA large subunit methyltransferase E, found in Methanospirillum hungatei JF-1 (strain ATCC 27890 / DSM 864 / NBRC 100397 / JF-1).